A 61-amino-acid chain; its full sequence is Short neurotoxin 1 (61 aa).

4 cysteine pairs are disulfide-bonded: cysteine 3–cysteine 23, cysteine 17–cysteine 40, cysteine 42–cysteine 53, and cysteine 54–cysteine 59.

The protein belongs to the three-finger toxin family. Short-chain subfamily. Type I alpha-neurotoxin sub-subfamily. Expressed by the venom gland.

It localises to the secreted. In terms of biological role, binds to muscle nicotinic acetylcholine receptor (nAChR) and inhibit acetylcholine from binding to the receptor, thereby impairing neuromuscular transmission. Its function is as follows. Produces peripheral paralysis by blocking neuromuscular transmission at the postsynaptic site. Binds to the muscular nicotinic acetylcholine receptor. The protein is Short neurotoxin 1 of Naja annulifera (Banded Egyptian cobra).